The following is a 378-amino-acid chain: Acetylornithine deacetylase (378 aa).

H76 serves as a coordination point for Zn(2+). D78 is a catalytic residue. Zn(2+) is bound at residue D108. Residue E140 is part of the active site. Positions 141, 165, and 351 each coordinate Zn(2+).

It belongs to the peptidase M20A family. ArgE subfamily. As to quaternary structure, homodimer. The cofactor is Zn(2+). Co(2+) serves as cofactor. Glutathione is required as a cofactor.

The protein resides in the cytoplasm. The enzyme catalyses N(2)-acetyl-L-ornithine + H2O = L-ornithine + acetate. It participates in amino-acid biosynthesis; L-arginine biosynthesis; L-ornithine from N(2)-acetyl-L-ornithine (linear): step 1/1. Functionally, catalyzes the hydrolysis of the amide bond of N(2)-acetylated L-amino acids. Cleaves the acetyl group from N-acetyl-L-ornithine to form L-ornithine, an intermediate in L-arginine biosynthesis pathway, and a branchpoint in the synthesis of polyamines. The polypeptide is Acetylornithine deacetylase (Vibrio cholerae serotype O1 (strain ATCC 39541 / Classical Ogawa 395 / O395)).